A 293-amino-acid chain; its full sequence is Energy-coupling factor transporter ATP-binding protein EcfA2 (293 aa).

Positions 3 to 246 (ITFQKVEHRY…ADELEKIGVD (244 aa)) constitute an ABC transporter domain. Residue 40-47 (GHTGSGKS) participates in ATP binding.

It belongs to the ABC transporter superfamily. Energy-coupling factor EcfA family. As to quaternary structure, forms a stable energy-coupling factor (ECF) transporter complex composed of 2 membrane-embedded substrate-binding proteins (S component), 2 ATP-binding proteins (A component) and 2 transmembrane proteins (T component).

It localises to the cell membrane. Functionally, ATP-binding (A) component of a common energy-coupling factor (ECF) ABC-transporter complex. Unlike classic ABC transporters this ECF transporter provides the energy necessary to transport a number of different substrates. The protein is Energy-coupling factor transporter ATP-binding protein EcfA2 of Bacillus cereus (strain ZK / E33L).